A 447-amino-acid polypeptide reads, in one-letter code: uncharacterized protein (447 aa).

The disordered stretch occupies residues 39-76 (PQAAPYTRNNGMGECRRGHRQGHRAEVHDNRPADKVGQ). Residues 61 to 72 (HRAEVHDNRPAD) show a composition bias toward basic and acidic residues.

Belongs to the 3-oxoacid CoA-transferase subunit A family.

This is an uncharacterized protein from Archaeoglobus fulgidus (strain ATCC 49558 / DSM 4304 / JCM 9628 / NBRC 100126 / VC-16).